Here is an 80-residue protein sequence, read N- to C-terminus: Metallothionein-like protein type 2, MT2-28 (80 aa).

The protein belongs to the metallothionein superfamily. Type 15 family.

Its function is as follows. Metallothioneins have a high content of cysteine residues that bind various heavy metals. The chain is Metallothionein-like protein type 2, MT2-28 from Brassica juncea (Indian mustard).